Here is a 377-residue protein sequence, read N- to C-terminus: Glutamate 5-kinase (377 aa).

K22 provides a ligand contact to ATP. Positions 62, 149, and 161 each coordinate substrate. ATP is bound by residues T181–D182 and T223–K229. The PUA domain maps to R285 to Q363.

The protein belongs to the glutamate 5-kinase family.

It is found in the cytoplasm. The enzyme catalyses L-glutamate + ATP = L-glutamyl 5-phosphate + ADP. It participates in amino-acid biosynthesis; L-proline biosynthesis; L-glutamate 5-semialdehyde from L-glutamate: step 1/2. Its function is as follows. Catalyzes the transfer of a phosphate group to glutamate to form L-glutamate 5-phosphate. The sequence is that of Glutamate 5-kinase from Bifidobacterium longum (strain DJO10A).